Consider the following 567-residue polypeptide: MAATFLPATSLRLTQNSTLRFLSFFTISNPSYSLFRPLRRRVLPPFDAFPANSRRRCFCTAVSESLGSGDGNKVESYEKRFGSKVGEFRKKLRIAEVKGGADEGLSRVGQSLNIMGWVRTLRSQSSVTFIEINDGSCLSNLQCVMTSDAEGYDQVESGSILTGASVSVQGTIVASQGTKQKVELKVEKIIVVGECDSSYPIQKKRVSREFLRTKAHLRPRTNTFGAVARVRNTLAYATHKFFQESGFVWVASPIITASDCEGAGEQFCVTTLIPSSHENTDTSIDAIPKTKGGLIDWSQDFFGKPAFLTVSGQLNGETYATALSDVYTFGPTFRAENSNTSRHLAEFWMIEPELAFADLDDDMACATAYLQYVVKYVLDNCKEDMEFFDTWIEKGIIRRLSDVAEKEFLQLGYTDAIEILLKANKKFDFPVKWGLDLQSEHERYITEEAFGGRPVIIRDYPKEIKAFYMRENDDGKTVAAMDMLVPRIGELIGGSQREERLEVLEARLDELKLNKESYWWYLDLRRYGSVPHAGFGLGFERLVQFVTGIDNIRDVIPFPRTPASAEF.

The segment at residues 113-191 is a DNA-binding region (OB); it reads NIMGWVRTLR…VELKVEKIIV (79 aa).

It belongs to the class-II aminoacyl-tRNA synthetase family.

Its subcellular location is the plastid. It localises to the chloroplast. The protein resides in the mitochondrion. It catalyses the reaction tRNA(Asn) + L-asparagine + ATP = L-asparaginyl-tRNA(Asn) + AMP + diphosphate + H(+). This chain is Asparagine--tRNA ligase, chloroplastic/mitochondrial, found in Arabidopsis thaliana (Mouse-ear cress).